We begin with the raw amino-acid sequence, 238 residues long: Ditrans,polycis-undecaprenyl-diphosphate synthase ((2E,6E)-farnesyl-diphosphate specific) (238 aa).

The active site involves aspartate 14. Residue aspartate 14 coordinates Mg(2+). Residues 15–18 (GNGR), tryptophan 19, arginine 27, histidine 31, and 59–61 (SSE) contribute to the substrate site. Asparagine 62 (proton acceptor) is an active-site residue. Residues tryptophan 63, arginine 65, arginine 182, and 188–190 (RIS) each bind substrate. Residue glutamate 201 participates in Mg(2+) binding.

This sequence belongs to the UPP synthase family. Homodimer. Mg(2+) is required as a cofactor.

The catalysed reaction is 8 isopentenyl diphosphate + (2E,6E)-farnesyl diphosphate = di-trans,octa-cis-undecaprenyl diphosphate + 8 diphosphate. In terms of biological role, catalyzes the sequential condensation of isopentenyl diphosphate (IPP) with (2E,6E)-farnesyl diphosphate (E,E-FPP) to yield (2Z,6Z,10Z,14Z,18Z,22Z,26Z,30Z,34E,38E)-undecaprenyl diphosphate (di-trans,octa-cis-UPP). UPP is the precursor of glycosyl carrier lipid in the biosynthesis of bacterial cell wall polysaccharide components such as peptidoglycan and lipopolysaccharide. The polypeptide is Ditrans,polycis-undecaprenyl-diphosphate synthase ((2E,6E)-farnesyl-diphosphate specific) (Legionella pneumophila (strain Paris)).